Consider the following 921-residue polypeptide: Probable glucan 1,3-alpha-glucosidase (921 aa).

The signal sequence occupies residues 1–20; that stretch reads MRSLLFVLSLICFCSQTALS. Aspartate 512 acts as the Nucleophile in catalysis. Glutamate 515 is a catalytic residue. Aspartate 588 acts as the Proton donor in catalysis. Asparagine 689 and asparagine 804 each carry an N-linked (GlcNAc...) asparagine glycan.

The protein belongs to the glycosyl hydrolase 31 family. As to quaternary structure, heterodimer of a catalytic alpha subunit (PSL5) and a beta subunit (PSL4). In terms of tissue distribution, expressed in roots, rosette leaves, leaf blades, mature stems, cauline leaves, flower buds, flowers and siliques.

It is found in the endoplasmic reticulum. The catalysed reaction is Hydrolysis of terminal (1-&gt;3)-alpha-D-glucosidic links in (1-&gt;3)-alpha-D-glucans.. It functions in the pathway glycan metabolism; N-glycan metabolism. Its function is as follows. Cleaves sequentially the 2 innermost alpha-1,3-linked glucose residues from the Glc(2)Man(9)GlcNAc(2) oligosaccharide precursor of immature glycoproteins. Essential for stable accumulation of the receptor EFR that determines the specific perception of bacterial elongation factor Tu (EF-Tu), a potent elicitor of the defense response to pathogen-associated molecular patterns (PAMPs). Required for sustained activation of EFR-mediated signaling, but not receptor FLS2-mediated signaling elicited by the bacterial flagellin flg22. The polypeptide is Probable glucan 1,3-alpha-glucosidase (PSL5) (Arabidopsis thaliana (Mouse-ear cress)).